We begin with the raw amino-acid sequence, 484 residues long: Ribosome biogenesis protein YTM1 (484 aa).

Residues 13–95 (VKVTFTTTEA…ESNLTLQYVR (83 aa)) are ubiquitin-like (UBL) domain. WD repeat units follow at residues 122–161 (SPSG…IATS), 168–206 (GHTA…HFSG), 216–255 (GHTG…APEA), 288–328 (IHSA…VVTT), 330–373 (STSH…ATTS), 379–419 (GHAN…PATQ), and 448–484 (GEGC…VVAE).

Belongs to the WD repeat WDR12/YTM1 family. Component of the NOP7 complex, composed of ERB1, NOP7 and YTM1. The complex is held together by ERB1, which interacts with NOP7 via its N-terminal domain and with YTM1 via a high-affinity interaction between the seven-bladed beta-propeller domains of the 2 proteins. The NOP7 complex associates with the 66S pre-ribosome. Interacts (via UBL domain) with MDN1 (via VWFA/MIDAS domain).

Its subcellular location is the nucleus. The protein localises to the nucleolus. It is found in the nucleoplasm. Functionally, component of the NOP7 complex, which is required for maturation of the 25S and 5.8S ribosomal RNAs and formation of the 60S ribosome. This Chaetomium globosum (strain ATCC 6205 / CBS 148.51 / DSM 1962 / NBRC 6347 / NRRL 1970) (Soil fungus) protein is Ribosome biogenesis protein YTM1.